A 388-amino-acid chain; its full sequence is Succinate--CoA ligase [ADP-forming] subunit beta (388 aa).

Residues 9–244 (KSLFAEYGLP…PSQDDAREAH (236 aa)) form the ATP-grasp domain. ATP contacts are provided by residues Lys-46, 53–55 (GRG), Glu-99, Thr-102, and Glu-107. Positions 199 and 213 each coordinate Mg(2+). Residues Asn-264 and 321–323 (GIV) each bind substrate.

It belongs to the succinate/malate CoA ligase beta subunit family. Heterotetramer of two alpha and two beta subunits. The cofactor is Mg(2+).

The enzyme catalyses succinate + ATP + CoA = succinyl-CoA + ADP + phosphate. It catalyses the reaction GTP + succinate + CoA = succinyl-CoA + GDP + phosphate. The protein operates within carbohydrate metabolism; tricarboxylic acid cycle; succinate from succinyl-CoA (ligase route): step 1/1. Functionally, succinyl-CoA synthetase functions in the citric acid cycle (TCA), coupling the hydrolysis of succinyl-CoA to the synthesis of either ATP or GTP and thus represents the only step of substrate-level phosphorylation in the TCA. The beta subunit provides nucleotide specificity of the enzyme and binds the substrate succinate, while the binding sites for coenzyme A and phosphate are found in the alpha subunit. This Shewanella frigidimarina (strain NCIMB 400) protein is Succinate--CoA ligase [ADP-forming] subunit beta.